The sequence spans 379 residues: Cytochrome b (379 aa).

4 helical membrane-spanning segments follow: residues 34-54 (FGSL…LLAM), 78-99 (WLIR…YLHI), 114-134 (WNTG…GYVL), and 179-199 (FFAL…IHLT). Heme b contacts are provided by His-84 and His-98. Heme b is bound by residues His-183 and His-197. His-202 serves as a coordination point for a ubiquinone. Helical transmembrane passes span 227 to 247 (LKDI…AFFS), 289 to 309 (LGGV…PFLH), 321 to 341 (LSQV…WIGS), and 348 to 368 (FIII…ILFP).

Belongs to the cytochrome b family. In terms of assembly, the cytochrome bc1 complex contains 11 subunits: 3 respiratory subunits (MT-CYB, CYC1 and UQCRFS1), 2 core proteins (UQCRC1 and UQCRC2) and 6 low-molecular weight proteins (UQCRH/QCR6, UQCRB/QCR7, UQCRQ/QCR8, UQCR10/QCR9, UQCR11/QCR10 and a cleavage product of UQCRFS1). This cytochrome bc1 complex then forms a dimer. Heme b serves as cofactor.

The protein resides in the mitochondrion inner membrane. Functionally, component of the ubiquinol-cytochrome c reductase complex (complex III or cytochrome b-c1 complex) that is part of the mitochondrial respiratory chain. The b-c1 complex mediates electron transfer from ubiquinol to cytochrome c. Contributes to the generation of a proton gradient across the mitochondrial membrane that is then used for ATP synthesis. The polypeptide is Cytochrome b (MT-CYB) (Casuarius bennetti (Dwarf cassowary)).